The sequence spans 701 residues: Elongation factor G (701 aa).

Residues threonine 11–leucine 287 enclose the tr-type G domain. Residues alanine 20–threonine 27, aspartate 84–histidine 88, and asparagine 138–aspartate 141 each bind GTP.

The protein belongs to the TRAFAC class translation factor GTPase superfamily. Classic translation factor GTPase family. EF-G/EF-2 subfamily.

It is found in the cytoplasm. Functionally, catalyzes the GTP-dependent ribosomal translocation step during translation elongation. During this step, the ribosome changes from the pre-translocational (PRE) to the post-translocational (POST) state as the newly formed A-site-bound peptidyl-tRNA and P-site-bound deacylated tRNA move to the P and E sites, respectively. Catalyzes the coordinated movement of the two tRNA molecules, the mRNA and conformational changes in the ribosome. The polypeptide is Elongation factor G (Mycobacterium leprae (strain Br4923)).